The sequence spans 359 residues: DNA replication and repair protein RecF (359 aa).

30–37 (GQNAQGKT) contributes to the ATP binding site.

It belongs to the RecF family.

The protein localises to the cytoplasm. The RecF protein is involved in DNA metabolism; it is required for DNA replication and normal SOS inducibility. RecF binds preferentially to single-stranded, linear DNA. It also seems to bind ATP. This is DNA replication and repair protein RecF from Lactococcus lactis subsp. cremoris (strain MG1363).